The chain runs to 613 residues: UvrABC system protein C (613 aa).

The GIY-YIG domain occupies 29–107; the sequence is DVAGVYKMLG…IKTLKPKYNI (79 aa). A UVR domain is found at 217–252; sequence KELQRELFDSMRKFSDNLDYESAMVYRDRLQALKSI.

The protein belongs to the UvrC family. As to quaternary structure, interacts with UvrB in an incision complex.

The protein localises to the cytoplasm. Its function is as follows. The UvrABC repair system catalyzes the recognition and processing of DNA lesions. UvrC both incises the 5' and 3' sides of the lesion. The N-terminal half is responsible for the 3' incision and the C-terminal half is responsible for the 5' incision. The polypeptide is UvrABC system protein C (Anaplasma marginale (strain St. Maries)).